A 457-amino-acid chain; its full sequence is Phosphomethylpyrimidine synthase (457 aa).

Residues Asn81, Met110, Tyr139, His175, 195-197 (SRG), 236-239 (DALR), and Glu275 contribute to the substrate site. Zn(2+) is bound at residue His279. Position 302 (Tyr302) interacts with substrate. Residue His343 participates in Zn(2+) binding. Cys423, Cys426, and Cys431 together coordinate [4Fe-4S] cluster.

Belongs to the ThiC family. Requires [4Fe-4S] cluster as cofactor.

The enzyme catalyses 5-amino-1-(5-phospho-beta-D-ribosyl)imidazole + S-adenosyl-L-methionine = 4-amino-2-methyl-5-(phosphooxymethyl)pyrimidine + CO + 5'-deoxyadenosine + formate + L-methionine + 3 H(+). The protein operates within cofactor biosynthesis; thiamine diphosphate biosynthesis. In terms of biological role, catalyzes the synthesis of the hydroxymethylpyrimidine phosphate (HMP-P) moiety of thiamine from aminoimidazole ribotide (AIR) in a radical S-adenosyl-L-methionine (SAM)-dependent reaction. The protein is Phosphomethylpyrimidine synthase of Aquifex aeolicus (strain VF5).